The following is an 813-amino-acid chain: Leucine--tRNA ligase (813 aa).

Positions 40-51 match the 'HIGH' region motif; that stretch reads SYPSGSKLHAGH. The 'KMSKS' region motif lies at 572–576; it reads KMSKS. K575 is an ATP binding site.

Belongs to the class-I aminoacyl-tRNA synthetase family.

Its subcellular location is the cytoplasm. It carries out the reaction tRNA(Leu) + L-leucine + ATP = L-leucyl-tRNA(Leu) + AMP + diphosphate. This Clostridium botulinum (strain Langeland / NCTC 10281 / Type F) protein is Leucine--tRNA ligase.